Consider the following 633-residue polypeptide: Threonine--tRNA ligase (633 aa).

In terms of domain architecture, TGS spans 1–59 (MIKVTFLAEQKVKEYSGRVTGFDILQPDALREAIAFKVNGELYDLSREIESDTEIEVIQ). Residues 240 to 532 (DHRKIAKDMD…LIENYAGKFP (293 aa)) are catalytic. 3 residues coordinate Zn(2+): C332, H383, and H509.

It belongs to the class-II aminoacyl-tRNA synthetase family. In terms of assembly, homodimer. Requires Zn(2+) as cofactor.

The protein resides in the cytoplasm. It carries out the reaction tRNA(Thr) + L-threonine + ATP = L-threonyl-tRNA(Thr) + AMP + diphosphate + H(+). Catalyzes the attachment of threonine to tRNA(Thr) in a two-step reaction: L-threonine is first activated by ATP to form Thr-AMP and then transferred to the acceptor end of tRNA(Thr). Also edits incorrectly charged L-seryl-tRNA(Thr). This Wolbachia pipientis subsp. Culex pipiens (strain wPip) protein is Threonine--tRNA ligase.